We begin with the raw amino-acid sequence, 347 residues long: GPN-loop GTPase 2 (347 aa).

Residue 12–17 (GSGKST) coordinates GTP. The short motif at 69-71 (GPN) is the Gly-Pro-Asn (GPN)-loop; involved in dimer interface element. 175–178 (SKID) is a GTP binding site.

This sequence belongs to the GPN-loop GTPase family. As to quaternary structure, heterodimers with NPA3/GPN1 or GPN3. Binds to RNA polymerase II (RNAPII).

The protein localises to the cytoplasm. Its function is as follows. Small GTPase required for proper localization of RNA polymerase II and III (RNAPII and RNAPIII). May act at an RNAP assembly step prior to nuclear import. Required for establishment of sister chromatid cohesion. The protein is GPN-loop GTPase 2 of Saccharomyces cerevisiae (strain ATCC 204508 / S288c) (Baker's yeast).